Consider the following 280-residue polypeptide: Tryptophan synthase alpha chain (280 aa).

Residues glutamate 50 and aspartate 61 each act as proton acceptor in the active site.

This sequence belongs to the TrpA family. Tetramer of two alpha and two beta chains.

It carries out the reaction (1S,2R)-1-C-(indol-3-yl)glycerol 3-phosphate + L-serine = D-glyceraldehyde 3-phosphate + L-tryptophan + H2O. It functions in the pathway amino-acid biosynthesis; L-tryptophan biosynthesis; L-tryptophan from chorismate: step 5/5. Functionally, the alpha subunit is responsible for the aldol cleavage of indoleglycerol phosphate to indole and glyceraldehyde 3-phosphate. This is Tryptophan synthase alpha chain from Methylorubrum extorquens (strain PA1) (Methylobacterium extorquens).